The chain runs to 107 residues: Nucleoid-associated protein RBE_0048 (107 aa).

It belongs to the YbaB/EbfC family. As to quaternary structure, homodimer.

The protein resides in the cytoplasm. It is found in the nucleoid. In terms of biological role, binds to DNA and alters its conformation. May be involved in regulation of gene expression, nucleoid organization and DNA protection. The polypeptide is Nucleoid-associated protein RBE_0048 (Rickettsia bellii (strain RML369-C)).